The primary structure comprises 478 residues: Proline--tRNA ligase (478 aa).

The protein belongs to the class-II aminoacyl-tRNA synthetase family. ProS type 3 subfamily. In terms of assembly, homodimer.

It localises to the cytoplasm. It catalyses the reaction tRNA(Pro) + L-proline + ATP = L-prolyl-tRNA(Pro) + AMP + diphosphate. In terms of biological role, catalyzes the attachment of proline to tRNA(Pro) in a two-step reaction: proline is first activated by ATP to form Pro-AMP and then transferred to the acceptor end of tRNA(Pro). The sequence is that of Proline--tRNA ligase from Methanoregula boonei (strain DSM 21154 / JCM 14090 / 6A8).